The primary structure comprises 616 residues: Prolactin receptor (616 aa).

A signal peptide spans 1 to 24 (MKENVASMIVFLLLLFLNIRLLKG). The Extracellular portion of the chain corresponds to 25–234 (QSPPGKPFIF…QIPNDFTMKD (210 aa)). Fibronectin type-III domains lie at 27–128 (PPGK…VEPD) and 129–229 (PPVN…IPND). An intrachain disulfide couples C36 to C46. An N-linked (GlcNAc...) asparagine glycan is attached at N59. Residues C75 and C86 are joined by a disulfide bond. N-linked (GlcNAc...) asparagine glycans are attached at residues N104 and N132. Positions 211 and 212 each coordinate Zn(2+). The WSXWS motif signature appears at 215–219 (WSVWS). A helical membrane pass occupies residues 235–258 (ITVWIFVAVLSTIICLIMVWAVAL). Topologically, residues 259–616 (KGYSMVTCIF…DPACFMHSLH (358 aa)) are cytoplasmic. A Box 1 motif motif is present at residues 267 to 275 (IFPPVPGPK). Disordered stretches follow at residues 326 to 375 (MPAH…STFH), 454 to 492 (QSSK…PKEK), and 568 to 593 (ESTK…STAP). A compositionally biased stretch (basic and acidic residues) spans 463 to 482 (GEEKATKQREVESSHSKAEQ).

Belongs to the type I cytokine receptor family. Type 1 subfamily. Interacts with SMARCA1. Interacts with NEK3 and VAV2 and this interaction is prolactin-dependent.

Its subcellular location is the membrane. This is a receptor for the anterior pituitary hormone prolactin. This chain is Prolactin receptor (PRLR), found in Oryctolagus cuniculus (Rabbit).